Consider the following 196-residue polypeptide: Potassium-transporting ATPase KdpC subunit (196 aa).

A helical transmembrane segment spans residues P7 to V27.

The protein belongs to the KdpC family. In terms of assembly, the system is composed of three essential subunits: KdpA, KdpB and KdpC.

The protein localises to the cell inner membrane. Its function is as follows. Part of the high-affinity ATP-driven potassium transport (or Kdp) system, which catalyzes the hydrolysis of ATP coupled with the electrogenic transport of potassium into the cytoplasm. This subunit acts as a catalytic chaperone that increases the ATP-binding affinity of the ATP-hydrolyzing subunit KdpB by the formation of a transient KdpB/KdpC/ATP ternary complex. The chain is Potassium-transporting ATPase KdpC subunit from Caulobacter sp. (strain K31).